Consider the following 75-residue polypeptide: U6-lycotoxin-Ls1c (75 aa).

A signal peptide spans 1-21; sequence MKLLLFTALVLVVISLIEVEA. Positions 22–25 are excised as a propeptide; sequence ENER. 4 disulfide bridges follow: Cys27–Cys42, Cys34–Cys47, Cys41–Cys65, and Cys49–Cys63.

Belongs to the neurotoxin 19 (CSTX) family. 06 (U6-Lctx) subfamily. Expressed by the venom gland.

It is found in the secreted. The polypeptide is U6-lycotoxin-Ls1c (Lycosa singoriensis (Wolf spider)).